Here is a 524-residue protein sequence, read N- to C-terminus: MMKSLLPQSQLRRSAAAASAARSSGGGAGSGGADGAGSDGGAGGRAPATSTFWFLLHALCCLVSLFLGFRFSRLLFFLLFSTTALYSSTSSSSSSAVLRATTTTTTTTTTTTTTTNTFTLSFQANPNPPPSNLSNHTALDAAGAAGHTQSHVVVGRHGIRIRPWPHPDPVEVMRAHRIMERVQEEQRRWYGVKEPRHVLVVTPTYSRAFQALHLTGLLHSLRNVPYPLTWIVVEAGGTTNATASLLARSDLTIVHIPFPDRMPHDWADRHATENRMRLHALRVIRERKMDGVIVFADDSNVHSLELFDEVQKVQWMGAVSVGILAHTGTADQPRLSEEDKQNMPLPVQGPACNSSGHLAGWHTFNSLPFAGKTATVVGEAAPVLPRGLEWAGFVLNSRILWKEAEGKPDWVKDLDAVGENGEEIENPLILLNDPSSVEPLGNCGKKILLWWLRVEARADSKFPQGWVIEPPLDIVVPAKRTPWPETTAELSAELVDSKQDQEGRRLSRTDRSSRSRSTTKRKEN.

The Cytoplasmic segment spans residues M1 to T51. The disordered stretch occupies residues A21–G41. The span at S24–G41 shows a compositional bias: gly residues. A helical; Signal-anchor for type II membrane protein membrane pass occupies residues F52–F71. The Lumenal portion of the chain corresponds to S72–N524. Residues N132, N135, N240, and N353 are each glycosylated (N-linked (GlcNAc...) asparagine). The tract at residues A492 to N524 is disordered. Residues V495 to S513 show a composition bias toward basic and acidic residues.

Belongs to the glycosyltransferase 43 family.

The protein localises to the golgi apparatus membrane. Functionally, probable beta-1,4-xylosyltransferase involved in xylan biosynthesis in cell walls. This Oryza sativa subsp. japonica (Rice) protein is Probable beta-1,4-xylosyltransferase IRX14.